The sequence spans 202 residues: IMP cyclohydrolase (202 aa).

Belongs to the archaeal IMP cyclohydrolase family.

It carries out the reaction IMP + H2O = 5-formamido-1-(5-phospho-D-ribosyl)imidazole-4-carboxamide. It participates in purine metabolism; IMP biosynthesis via de novo pathway; IMP from 5-formamido-1-(5-phospho-D-ribosyl)imidazole-4-carboxamide: step 1/1. In terms of biological role, catalyzes the cyclization of 5-formylamidoimidazole-4-carboxamide ribonucleotide to IMP. The protein is IMP cyclohydrolase of Methanothermobacter thermautotrophicus (strain ATCC 29096 / DSM 1053 / JCM 10044 / NBRC 100330 / Delta H) (Methanobacterium thermoautotrophicum).